The chain runs to 359 residues: Phosphoribosylformylglycinamidine cyclo-ligase (359 aa).

The protein belongs to the AIR synthase family.

Its subcellular location is the cytoplasm. The enzyme catalyses 2-formamido-N(1)-(5-O-phospho-beta-D-ribosyl)acetamidine + ATP = 5-amino-1-(5-phospho-beta-D-ribosyl)imidazole + ADP + phosphate + H(+). Its pathway is purine metabolism; IMP biosynthesis via de novo pathway; 5-amino-1-(5-phospho-D-ribosyl)imidazole from N(2)-formyl-N(1)-(5-phospho-D-ribosyl)glycinamide: step 2/2. The polypeptide is Phosphoribosylformylglycinamidine cyclo-ligase (Brucella melitensis biotype 2 (strain ATCC 23457)).